The following is a 1108-amino-acid chain: Retinal guanylyl cyclase 2 (1108 aa).

Positions 1 to 50 (MFLGPWPFSRLLSWFAISSRLSGQHGLPSSKFLRCLCLLALLPLLRWGQA) are cleaved as a signal peptide. The Extracellular segment spans residues 51–469 (LPYKIGVIGP…CQGGIDPALA (419 aa)). A disulfide bridge links Cys104 with Cys132. A helical membrane pass occupies residues 470 to 490 (MMVCFALLIALLSINGFAYFI). The Cytoplasmic segment spans residues 491–1108 (RRRINKIQLI…AERQLVRNKP (618 aa)). Residues 532-812 (FQIISEVQSG…DEIFNQFKTF (281 aa)) form the Protein kinase domain. The Guanylate cyclase domain occupies 884–1014 (TLYFSDIVGF…DTVNTASRME (131 aa)).

Belongs to the adenylyl cyclase class-4/guanylyl cyclase family. In terms of assembly, homodimer. Interacts with RD3; promotes the exit of GUCY2F from the endoplasmic reticulum and its trafficking to the photoreceptor outer segments. Post-translationally, there are 9 conserved cysteine residues in sensory guanylate cyclases, 6 in the extracellular domain, which may be involved in intra- or interchain disulfide bonds. In terms of tissue distribution, retina.

It localises to the membrane. The protein resides in the photoreceptor outer segment membrane. The catalysed reaction is GTP = 3',5'-cyclic GMP + diphosphate. Activated by GUCA1B when free calcium ions concentration is low, and inhibited by GUCA1B when free calcium ions concentration is high. Inhibited by RD3. Functionally, responsible for the synthesis of cyclic GMP (cGMP) in rods and cones of photoreceptors. Plays an essential role in phototransduction, by mediating cGMP replenishment. May also participate in the trafficking of membrane-asociated proteins to the photoreceptor outer segment membrane. The chain is Retinal guanylyl cyclase 2 from Mus musculus (Mouse).